The primary structure comprises 297 residues: SWIRM domain-containing protein laf1 (297 aa).

2 disordered regions span residues 50–70 (PKCS…KPTA) and 109–173 (STPA…EFSS). Polar residues predominate over residues 159 to 173 (QHNTRFKQSSREFSS). The 91-residue stretch at 207–297 (LRSEWKGPPL…AFHDEGFFDD (91 aa)) folds into the SWIRM domain.

Component of the RPD3C(L) complex.

It is found in the nucleus. Component of the RPD3C(L) histone deacetylase complex (HDAC) responsible for the deacetylation of lysine residues on the N-terminal part of the core histones (H2A, H2B, H3 and H4). Histone deacetylation gives a tag for epigenetic repression and plays an important role in transcriptional regulation, cell cycle progression and developmental events. The sequence is that of SWIRM domain-containing protein laf1 (laf1) from Schizosaccharomyces pombe (strain 972 / ATCC 24843) (Fission yeast).